We begin with the raw amino-acid sequence, 203 residues long: Large ribosomal subunit protein eL15 (203 aa).

Residues 166–203 form a disordered region; that stretch reads ATGKKSRGINKGHRYNNTRSGRRHTWKRQNTQSYWRYR. Over residues 169 to 192 the composition is skewed to basic residues; the sequence is KKSRGINKGHRYNNTRSGRRHTWK. The span at 193–203 shows a compositional bias: polar residues; that stretch reads RQNTQSYWRYR.

It belongs to the eukaryotic ribosomal protein eL15 family.

This is Large ribosomal subunit protein eL15 (rpl15) from Aspergillus niger.